The sequence spans 388 residues: Serpin B11 (388 aa).

The segment at 338–362 (EEGTEAAAATGESISVKRLPVTVQF) is RCL.

This sequence belongs to the serpin family. Ov-serpin subfamily. Expressed in eye, lung, lymphocytes, thymus, stomach, uterus, heart, brain, liver, skeletal muscle, and in day 7, 15, and 17 embryos.

The protein localises to the cytoplasm. Its function is as follows. Inhibitor of serine proteases. Has moderate inhibitory activity for trypsin-like peptidases, but also some activity with cysteine peptidases, cathepsin L, K, and V, and the serine peptidase, tryptase gamma. In Mus musculus (Mouse), this protein is Serpin B11 (Serpinb11).